The sequence spans 130 residues: Small ribosomal subunit protein uS8 (130 aa).

The protein belongs to the universal ribosomal protein uS8 family. As to quaternary structure, part of the 30S ribosomal subunit.

Its function is as follows. One of the primary rRNA binding proteins, it binds directly to 16S rRNA central domain where it helps coordinate assembly of the platform of the 30S subunit. This Pyrococcus furiosus (strain ATCC 43587 / DSM 3638 / JCM 8422 / Vc1) protein is Small ribosomal subunit protein uS8.